The sequence spans 1083 residues: Error-prone DNA polymerase (1083 aa).

Belongs to the DNA polymerase type-C family. DnaE2 subfamily.

Its subcellular location is the cytoplasm. It catalyses the reaction DNA(n) + a 2'-deoxyribonucleoside 5'-triphosphate = DNA(n+1) + diphosphate. In terms of biological role, DNA polymerase involved in damage-induced mutagenesis and translesion synthesis (TLS). It is not the major replicative DNA polymerase. The chain is Error-prone DNA polymerase from Xanthomonas oryzae pv. oryzae (strain KACC10331 / KXO85).